A 438-amino-acid polypeptide reads, in one-letter code: Protein ROOT INITIATION DEFECTIVE 3 (438 aa).

WD repeat units lie at residues 36-74 (AHGL…AEVK), 76-115 (YPVE…LLKK), 118-157 (GHYR…DDFQ), 171-212 (EHTM…LLKN), 214-253 (IFPS…EYGT), and 261-300 (EKGK…HVRT). A coiled-coil region spans residues 394-434 (AATEMEMERLKLEYKRSLQMNEQWQKNYENLLQVVMEEEQI).

Functionally, involved in meristem development. Acts as a negative regulator of the CUC-STM pathway in shoot apical meristem (SAM) neo-formation. The chain is Protein ROOT INITIATION DEFECTIVE 3 (RID3) from Arabidopsis thaliana (Mouse-ear cress).